The sequence spans 556 residues: HIRA-interacting protein 3 (556 aa).

Phosphoserine is present on S27. The segment covering D64 to K77 has biased composition (basic and acidic residues). The segment at D64–V426 is disordered. At T84 the chain carries Phosphothreonine. A phosphoserine mark is found at S87, S98, S100, S125, S142, S143, S159, and S160. Over residues E99–S108 the composition is skewed to low complexity. The span at P126–E158 shows a compositional bias: basic and acidic residues. Over residues K168–V177 the composition is skewed to basic residues. A phosphoserine mark is found at S196, S199, S223, and S227. Residues K209–E224 are compositionally biased toward basic and acidic residues. The span at E240–K254 shows a compositional bias: acidic residues. The span at R260 to S269 shows a compositional bias: basic residues. 2 positions are modified to phosphoserine: S289 and S291. The span at D304–Q322 shows a compositional bias: basic and acidic residues. Phosphoserine is present on residues S330, S332, S333, and S357. T358 bears the Phosphothreonine mark. 4 positions are modified to phosphoserine: S359, S363, S370, and S372. Basic residues predominate over residues R385–T396. An interaction with the histone H2A-H2B complex region spans residues S403–T527. T471 carries the phosphothreonine modification. The segment at S502–N556 is disordered. Basic and acidic residues predominate over residues L523–R536. Phosphoserine is present on residues S530, S550, S551, and S555.

Interacts (via C-terminus) with histone H2A-H2B dimers; the interaction is direct. Interacts with HIRA. Interacts with CK2. In terms of processing, phosphorylated by CK2. As to expression, widely expressed. Isoform 1 is predominant in skeletal muscle. Isoform 2 is predominant in liver and heart.

The protein resides in the nucleus. Functionally, histone chaperone that carries a H2A-H2B histone complex and facilitates its deposition onto chromatin. This chain is HIRA-interacting protein 3 (HIRIP3), found in Homo sapiens (Human).